Here is a 626-residue protein sequence, read N- to C-terminus: DNA-directed RNA polymerase subunit gamma (626 aa).

Zn(2+) is bound by residues Cys-71, Cys-73, Cys-86, and Cys-89. Asp-467, Asp-469, and Asp-471 together coordinate Mg(2+).

This sequence belongs to the RNA polymerase beta' chain family. RpoC1 subfamily. As to quaternary structure, in cyanobacteria the RNAP catalytic core is composed of 2 alpha, 1 beta, 1 beta', 1 gamma and 1 omega subunit. When a sigma factor is associated with the core the holoenzyme is formed, which can initiate transcription. Requires Mg(2+) as cofactor. Zn(2+) serves as cofactor.

It catalyses the reaction RNA(n) + a ribonucleoside 5'-triphosphate = RNA(n+1) + diphosphate. DNA-dependent RNA polymerase catalyzes the transcription of DNA into RNA using the four ribonucleoside triphosphates as substrates. In Synechocystis sp. (strain ATCC 27184 / PCC 6803 / Kazusa), this protein is DNA-directed RNA polymerase subunit gamma.